We begin with the raw amino-acid sequence, 1313 residues long: Angiotensin-converting enzyme (1313 aa).

Residues 1–35 form the signal peptide; the sequence is MGAASGQRGRWPLSPPLLMLSLLLLLLLPPSPAPA. Topologically, residues 36–1265 are extracellular; it reads LDPGLQPGNF…LEPQQARVGQ (1230 aa). Residues Asn44, Asn60, Asn80, Asn117, Asn152, and Asn166 are each glycosylated (N-linked (GlcNAc...) asparagine). Peptidase M2 domains follow at residues 46–630 and 649–1228; these read SADE…LGWP and ETDE…LGWP. Cys163 and Cys171 are joined by a disulfide. Tyr237 provides a ligand contact to chloride. Asn324 carries an N-linked (GlcNAc...) asparagine glycan. Cys365 and Cys383 are disulfide-bonded. A Zn(2+)-binding site is contributed by His396. Residue Glu397 is the Proton acceptor 1 of the active site. Zn(2+)-binding residues include His400 and Glu424. N-linked (GlcNAc...) asparagine glycosylation occurs at Asn515. The active-site Proton donor 1 is His526. Arg535 contributes to the chloride binding site. Cys551 and Cys563 are joined by a disulfide. Residues Asn683, Asn701, Asn720, and Asn766 are each glycosylated (N-linked (GlcNAc...) asparagine). Cys763 and Cys769 are oxidised to a cystine. 2 residues coordinate chloride: Arg797 and Tyr835. Asn948 is a glycosylation site (N-linked (GlcNAc...) asparagine). Cys963 and Cys981 are disulfide-bonded. Residue His994 coordinates Zn(2+). Residue Glu995 is the Proton acceptor 2 of the active site. Residues His998 and Glu1022 each coordinate Zn(2+). Residues Trp1096 and Arg1100 each contribute to the chloride site. Residue His1124 is the Proton donor 2 of the active site. Position 1133 (Arg1133) interacts with chloride. A disulfide bridge links Cys1149 with Cys1161. Asn1197 carries N-linked (GlcNAc...) asparagine glycosylation. The interval 1221-1262 is juxtamembrane stalk; the sequence is HGETLGWPEYTWTPNTARAEGSLPESSRVNFLGMYLEPQQAR. The chain crosses the membrane as a helical span at residues 1266–1282; sequence WVLLFLGVALLVATVGL. Over 1283-1313 the chain is Cytoplasmic; sequence AHRLYNIHNHHSLRRPHRGPQFGSEVELRHS. Ser1306 is modified (phosphoserine).

The protein belongs to the peptidase M2 family. Monomer and homodimer; homodimerizes following binding to an inhibitor. Interacts with calmodulin (CALM1, CALM2 or CALM3); interaction takes place in the cytoplasmic region and regulates phosphorylation and proteolytic cleavage. Zn(2+) is required as a cofactor. The cofactor is chloride. In terms of processing, produced following proteolytic cleavage by secretase enzymes that cleave the transmembrane form in the juxtamembrane stalk region upstream of the transmembrane region. Cleavage can take place at different sites of the juxtamembrane stalk region. Post-translationally, phosphorylated by CK2 on Ser-1306; which allows membrane retention. Phosphorylated on tyrosine residues on its extracellular part, promoting cleavage by secretase enzymes and formation of the soluble form (Angiotensin-converting enzyme, soluble form). As to expression, expressed in brain, kidney, lung, skeletal muscle and heart. Testis-specific isoform is expressed in spermatocytes, adult testis.

It localises to the cell membrane. It is found in the cytoplasm. Its subcellular location is the secreted. It carries out the reaction Release of a C-terminal dipeptide, oligopeptide-|-Xaa-Yaa, when Xaa is not Pro, and Yaa is neither Asp nor Glu. Thus, conversion of angiotensin I to angiotensin II, with increase in vasoconstrictor activity, but no action on angiotensin II.. The catalysed reaction is angiotensin I + H2O = L-histidyl-L-leucine + angiotensin II. It catalyses the reaction bradykinin + H2O = L-Phe-L-Arg + bradykinin(1-7). The enzyme catalyses substance P + H2O = substance P(1-9) + L-Leu-L-Met-NH2. It carries out the reaction substance P + H2O = substance P(1-8) + Gly-L-Leu-L-Met-NH2. The catalysed reaction is substance P + H2O = L-Phe-L-Phe-Gly-L-Leu-L-Met-NH2 + substance P(1-6). It catalyses the reaction neurotensin + H2O = neurotensin(1-11) + L-isoleucyl-L-leucine. The enzyme catalyses goralatide + H2O = N-acetyl-L-seryl-L-aspartate + L-lysyl-L-proline. It carries out the reaction Met-enkephalin + H2O = L-phenylalanyl-L-methionine + L-tyrosylglycylglycine. The catalysed reaction is Leu-enkephalin + H2O = L-tyrosylglycylglycine + L-phenylalanyl-L-leucine. It catalyses the reaction Met-enkephalin-Arg-Phe + H2O = L-arginyl-L-phenylalanine + Met-enkephalin. The dipeptidyl carboxypeptidase activity is strongly activated by chloride. The dipeptidyl carboxypeptidase activity is specifically inhibited by lisinopril, captopril and enalaprilat. Its activity is regulated as follows. Strongly inhibited by lisinopril and captopril. Functionally, dipeptidyl carboxypeptidase that removes dipeptides from the C-terminus of a variety of circulating hormones, such as angiotensin I, bradykinin or enkephalins, thereby playing a key role in the regulation of blood pressure, electrolyte homeostasis or synaptic plasticity. Composed of two similar catalytic domains, each possessing a functional active site, with different selectivity for substrates. Plays a major role in the angiotensin-renin system that regulates blood pressure and sodium retention by the kidney by converting angiotensin I to angiotensin II, resulting in an increase of the vasoconstrictor activity of angiotensin. Also able to inactivate bradykinin, a potent vasodilator, and therefore enhance the blood pressure response. Acts as a regulator of synaptic transmission by mediating cleavage of neuropeptide hormones, such as substance P, neurotensin or enkephalins. Catalyzes degradation of different enkephalin neuropeptides (Met-enkephalin, Leu-enkephalin, Met-enkephalin-Arg-Phe and possibly Met-enkephalin-Arg-Gly-Leu). Acts as a regulator of synaptic plasticity in the nucleus accumbens of the brain by mediating cleavage of Met-enkephalin-Arg-Phe, a strong ligand of Mu-type opioid receptor OPRM1, into Met-enkephalin. Met-enkephalin-Arg-Phe cleavage by ACE decreases activation of OPRM1, leading to long-term synaptic potentiation of glutamate release. Also acts as a regulator of hematopoietic stem cell differentiation by mediating degradation of hemoregulatory peptide N-acetyl-SDKP (AcSDKP). Acts as a regulator of cannabinoid signaling pathway by mediating degradation of hemopressin, an antagonist peptide of the cannabinoid receptor CNR1. Involved in amyloid-beta metabolism by catalyzing degradation of Amyloid-beta protein 40 and Amyloid-beta protein 42 peptides, thereby preventing plaque formation. Catalyzes cleavage of cholecystokinin (maturation of Cholecystokinin-8 and Cholecystokinin-5) and Gonadoliberin-1 (both maturation and degradation) hormones. Degradation of hemoregulatory peptide N-acetyl-SDKP (AcSDKP) and amyloid-beta proteins is mediated by the N-terminal catalytic domain, while angiotensin I and cholecystokinin cleavage is mediated by the C-terminal catalytic region. Soluble form that is released in blood plasma and other body fluids following proteolytic cleavage in the juxtamembrane stalk region. Its function is as follows. Isoform produced by alternative promoter usage that is specifically expressed in spermatocytes and adult testis, and which is required for male fertility. In contrast to somatic isoforms, only contains one catalytic domain. Acts as a dipeptidyl carboxypeptidase that removes dipeptides from the C-terminus of substrates. The identity of substrates that are needed for male fertility is unknown. May also have a glycosidase activity which releases GPI-anchored proteins from the membrane by cleaving the mannose linkage in the GPI moiety. The GPIase activity was reported to be essential for the egg-binding ability of the sperm. This activity is however unclear and has been challenged by other groups, suggesting that it may be indirect. The chain is Angiotensin-converting enzyme from Rattus norvegicus (Rat).